A 120-amino-acid polypeptide reads, in one-letter code: NAD(P)H-quinone oxidoreductase subunit 3, chloroplastic (120 aa).

3 helical membrane passes run 9–29 (IFWTFLIIASLIPILVFWISG), 64–84 (MFALVFVVFDVETVFLYPWAM), and 88–108 (VLGVSVFIEAFIFVLILVVGL).

It belongs to the complex I subunit 3 family. NDH is composed of at least 16 different subunits, 5 of which are encoded in the nucleus.

It is found in the plastid. Its subcellular location is the chloroplast thylakoid membrane. It carries out the reaction a plastoquinone + NADH + (n+1) H(+)(in) = a plastoquinol + NAD(+) + n H(+)(out). It catalyses the reaction a plastoquinone + NADPH + (n+1) H(+)(in) = a plastoquinol + NADP(+) + n H(+)(out). In terms of biological role, NDH shuttles electrons from NAD(P)H:plastoquinone, via FMN and iron-sulfur (Fe-S) centers, to quinones in the photosynthetic chain and possibly in a chloroplast respiratory chain. The immediate electron acceptor for the enzyme in this species is believed to be plastoquinone. Couples the redox reaction to proton translocation, and thus conserves the redox energy in a proton gradient. The protein is NAD(P)H-quinone oxidoreductase subunit 3, chloroplastic of Zea mays (Maize).